Consider the following 348-residue polypeptide: Ion-translocating oxidoreductase complex subunit D (348 aa).

5 helical membrane passes run Leu-15–Ala-35, Tyr-36–Ile-56, Leu-67–Ser-87, Ile-88–Ala-108, and Val-125–Ile-145. Thr-186 carries the post-translational modification FMN phosphoryl threonine. Transmembrane regions (helical) follow at residues Leu-212–Ile-232, Ile-241–Pro-261, Leu-265–Thr-285, Leu-298–Pro-318, and Ala-320–Gln-340.

Belongs to the NqrB/RnfD family. As to quaternary structure, the complex is composed of six subunits: RnfA, RnfB, RnfC, RnfD, RnfE and RnfG. Requires FMN as cofactor.

Its subcellular location is the cell inner membrane. Part of a membrane-bound complex that couples electron transfer with translocation of ions across the membrane. This Actinobacillus pleuropneumoniae serotype 7 (strain AP76) protein is Ion-translocating oxidoreductase complex subunit D.